The following is a 480-amino-acid chain: Cytochrome b-c1 complex subunit 1, mitochondrial (480 aa).

A mitochondrion-targeting transit peptide spans 1–34 (MAASAVCRAACSGTQVLLRTRRSPALLRLPALRG). Lys-111 and Lys-138 each carry N6-acetyllysine. N6-acetyllysine; alternate is present on Lys-163. Lys-163 is subject to N6-succinyllysine; alternate. At Ser-212 the chain carries Phosphoserine. Phosphothreonine is present on Thr-214. Lys-248 is subject to N6-acetyllysine.

The protein belongs to the peptidase M16 family. UQCRC1/QCR1 subfamily. As to quaternary structure, component of the ubiquinol-cytochrome c oxidoreductase (cytochrome b-c1 complex, complex III, CIII), a multisubunit enzyme composed of 11 subunits. The complex is composed of 3 respiratory subunits cytochrome b, cytochrome c1 and Rieske protein UQCRFS1, 2 core protein subunits UQCRC1/QCR1 and UQCRC2/QCR2, and 6 low-molecular weight protein subunits UQCRH/QCR6, UQCRB/QCR7, UQCRQ/QCR8, UQCR10/QCR9, UQCR11/QCR10 and subunit 9, the cleavage product of Rieske protein UQCRFS1. The complex exists as an obligatory dimer and forms supercomplexes (SCs) in the inner mitochondrial membrane with NADH-ubiquinone oxidoreductase (complex I, CI) and cytochrome c oxidase (complex IV, CIV), resulting in different assemblies (supercomplex SCI(1)III(2)IV(1) and megacomplex MCI(2)III(2)IV(2)). Interacts with UQCC6. Interacts with STMP1. Acetylation of Lys-138 is observed in liver mitochondria from fasted mice but not from fed mice. In terms of tissue distribution, expressed in neurons and astrocytes of the cerebral cortex and hippocampus (at protein level).

It localises to the mitochondrion inner membrane. Its function is as follows. Component of the ubiquinol-cytochrome c oxidoreductase, a multisubunit transmembrane complex that is part of the mitochondrial electron transport chain which drives oxidative phosphorylation. The respiratory chain contains 3 multisubunit complexes succinate dehydrogenase (complex II, CII), ubiquinol-cytochrome c oxidoreductase (cytochrome b-c1 complex, complex III, CIII) and cytochrome c oxidase (complex IV, CIV), that cooperate to transfer electrons derived from NADH and succinate to molecular oxygen, creating an electrochemical gradient over the inner membrane that drives transmembrane transport and the ATP synthase. The cytochrome b-c1 complex catalyzes electron transfer from ubiquinol to cytochrome c, linking this redox reaction to translocation of protons across the mitochondrial inner membrane, with protons being carried across the membrane as hydrogens on the quinol. In the process called Q cycle, 2 protons are consumed from the matrix, 4 protons are released into the intermembrane space and 2 electrons are passed to cytochrome c. The 2 core subunits UQCRC1/QCR1 and UQCRC2/QCR2 are homologous to the 2 mitochondrial-processing peptidase (MPP) subunits beta-MPP and alpha-MPP respectively, and they seem to have preserved their MPP processing properties. May be involved in the in situ processing of UQCRFS1 into the mature Rieske protein and its mitochondrial targeting sequence (MTS)/subunit 9 when incorporated into complex III. Seems to play an important role in the maintenance of proper mitochondrial function in nigral dopaminergic neurons. This is Cytochrome b-c1 complex subunit 1, mitochondrial (Uqcrc1) from Mus musculus (Mouse).